Reading from the N-terminus, the 223-residue chain is Deoxyribose-phosphate aldolase (223 aa).

Catalysis depends on Asp-91, which acts as the Proton donor/acceptor. The active-site Schiff-base intermediate with acetaldehyde is Lys-153. The Proton donor/acceptor role is filled by Lys-182.

This sequence belongs to the DeoC/FbaB aldolase family. DeoC type 1 subfamily.

It localises to the cytoplasm. It carries out the reaction 2-deoxy-D-ribose 5-phosphate = D-glyceraldehyde 3-phosphate + acetaldehyde. Its pathway is carbohydrate degradation; 2-deoxy-D-ribose 1-phosphate degradation; D-glyceraldehyde 3-phosphate and acetaldehyde from 2-deoxy-alpha-D-ribose 1-phosphate: step 2/2. In terms of biological role, catalyzes a reversible aldol reaction between acetaldehyde and D-glyceraldehyde 3-phosphate to generate 2-deoxy-D-ribose 5-phosphate. The polypeptide is Deoxyribose-phosphate aldolase (Streptococcus pyogenes serotype M28 (strain MGAS6180)).